The primary structure comprises 334 residues: Phosphate acyltransferase (334 aa).

Belongs to the PlsX family. In terms of assembly, homodimer. Probably interacts with PlsY.

It localises to the cytoplasm. The enzyme catalyses a fatty acyl-[ACP] + phosphate = an acyl phosphate + holo-[ACP]. Its pathway is lipid metabolism; phospholipid metabolism. In terms of biological role, catalyzes the reversible formation of acyl-phosphate (acyl-PO(4)) from acyl-[acyl-carrier-protein] (acyl-ACP). This enzyme utilizes acyl-ACP as fatty acyl donor, but not acyl-CoA. The chain is Phosphate acyltransferase from Desulfitobacterium hafniense (strain DSM 10664 / DCB-2).